The following is a 297-amino-acid chain: Counting factor 45-1 (297 aa).

The N-terminal stretch at 1–20 is a signal peptide; it reads MNKLISLLLVCLVAIALVNA. The Ch-type lysozyme domain maps to 24 to 235; sequence IDFDSDTVNS…SASTGSGSGS (212 aa). Active-site residues include aspartate 29, aspartate 119, and glutamate 121. Residue asparagine 166 is glycosylated (N-linked (GlcNAc...) asparagine). The segment at 231-296 is S-G-S motif repeats; the sequence is SGSGSSSGSS…GSSSGSGSGS (66 aa). Positions 231–297 are disordered; it reads SGSGSSSGSS…SSSGSGSGSS (67 aa). Residues 234–275 show a composition bias toward low complexity; the sequence is GSSSGSSSGSSSGSSSGSGSSSGSGSSSGSSSGSGSGSSSSG. A compositionally biased stretch (gly residues) spans 276–297; sequence SGSGSGSSSGSGSSSGSGSGSS.

It belongs to the glycosyl hydrolase 25 family. Monomer. Component of the counting factor (CF) complex, which includes cf60, cf50, cf45-1 and ctnA.

It is found in the secreted. Its function is as follows. Cell-counting factor that limits the maximum size of the multicellular structure during aggregation. The protein is Counting factor 45-1 (cf45-1) of Dictyostelium discoideum (Social amoeba).